We begin with the raw amino-acid sequence, 648 residues long: Acetyl-coenzyme A synthetase (648 aa).

CoA-binding positions include 191–194 (RGGR), threonine 310, and asparagine 334. ATP-binding positions include 386–388 (GEP), 410–415 (DTWWQT), aspartate 499, and arginine 514. Residue serine 522 participates in CoA binding. Position 525 (arginine 525) interacts with ATP. Residues valine 536, histidine 538, and isoleucine 541 each coordinate Mg(2+). CoA is bound at residue arginine 583. Position 608 is an N6-acetyllysine (lysine 608).

This sequence belongs to the ATP-dependent AMP-binding enzyme family. Mg(2+) is required as a cofactor. Acetylated. Deacetylation by the SIR2-homolog deacetylase activates the enzyme.

The enzyme catalyses acetate + ATP + CoA = acetyl-CoA + AMP + diphosphate. Catalyzes the conversion of acetate into acetyl-CoA (AcCoA), an essential intermediate at the junction of anabolic and catabolic pathways. AcsA undergoes a two-step reaction. In the first half reaction, AcsA combines acetate with ATP to form acetyl-adenylate (AcAMP) intermediate. In the second half reaction, it can then transfer the acetyl group from AcAMP to the sulfhydryl group of CoA, forming the product AcCoA. This is Acetyl-coenzyme A synthetase from Aeromonas salmonicida (strain A449).